The chain runs to 276 residues: MRGDGIRARKALGQNFLTDRSVLSRIAALVSAGAGERILEIGPGKGALTSYLAEQAGQLVAVELDDRLVPLLRGSFAGNPSVTIIEGDILDLDLRETLGRYGTPPWKVAANLPYNISTPVLFRLLDARDLFSRLVLMLQKEVGNRLAAGPGSKEYGVLSVLFQLHFDVTREILVRPGSFHPVPKVDSVVLLFVPLAQPRVDVGDEDYFRRVVKASFAMRRKTLWNCLKGGALGVPTDGIRDVLARCGIDEGRRGETLSLQEFASLTKGLLAAGGSL.

S-adenosyl-L-methionine-binding residues include Asn-15, Leu-17, Gly-42, Glu-63, Asp-88, and Asn-111.

It belongs to the class I-like SAM-binding methyltransferase superfamily. rRNA adenine N(6)-methyltransferase family. RsmA subfamily.

It localises to the cytoplasm. The catalysed reaction is adenosine(1518)/adenosine(1519) in 16S rRNA + 4 S-adenosyl-L-methionine = N(6)-dimethyladenosine(1518)/N(6)-dimethyladenosine(1519) in 16S rRNA + 4 S-adenosyl-L-homocysteine + 4 H(+). Functionally, specifically dimethylates two adjacent adenosines (A1518 and A1519) in the loop of a conserved hairpin near the 3'-end of 16S rRNA in the 30S particle. May play a critical role in biogenesis of 30S subunits. The chain is Ribosomal RNA small subunit methyltransferase A from Geobacter sulfurreducens (strain ATCC 51573 / DSM 12127 / PCA).